A 415-amino-acid polypeptide reads, in one-letter code: Putative serine/threonine-protein phosphatase 4 regulatory subunit 1-like (415 aa).

4 HEAT repeats span residues 86–124 (VMEIVVRLSEDAEPTVRTELMEQIPPIAIFLQENRSNFP), 163–202 (LLPRFCELCGDRKLFQVRKVCAANFGDICHAVGQEATEKF), 203–241 (LIPKFFELCSDAVWGMRKACAECFTAVSHSSSPGVRRTQ), and 242–280 (LFPLFIRLVSDPCRWVHQAAFQSLGPFTSTFANPSRAGL). The span at 301–318 (FASGSPAPSSGGNTSPAS) shows a compositional bias: low complexity. The tract at residues 301 to 362 (FASGSPAPSS…GPAESPVESC (62 aa)) is disordered.

Its function is as follows. May be a regulatory subunit of serine/threonine-protein phosphatase 4. In Homo sapiens (Human), this protein is Putative serine/threonine-protein phosphatase 4 regulatory subunit 1-like (PPP4R1L).